We begin with the raw amino-acid sequence, 122 residues long: Large ribosomal subunit protein uL14 (122 aa).

It belongs to the universal ribosomal protein uL14 family. Part of the 50S ribosomal subunit. Forms a cluster with proteins L3 and L19. In the 70S ribosome, L14 and L19 interact and together make contacts with the 16S rRNA in bridges B5 and B8.

Binds to 23S rRNA. Forms part of two intersubunit bridges in the 70S ribosome. This is Large ribosomal subunit protein uL14 from Alteromonas mediterranea (strain DSM 17117 / CIP 110805 / LMG 28347 / Deep ecotype).